Here is a 347-residue protein sequence, read N- to C-terminus: Calcium homeostasis modulator protein 3 (347 aa).

The Cytoplasmic portion of the chain corresponds to 1 to 20 (MDRFRMLFQHLQSSSESVMN). Positions 9-36 (QHLQSSSESVMNGICLLLAAVTVKIYSS) are central pore. The helical transmembrane segment at 21-36 (GICLLLAAVTVKIYSS) threads the bilayer. At 37–48 (LDFNCPCLERYN) the chain is on the extracellular side. Intrachain disulfides connect Cys-41–Cys-126 and Cys-43–Cys-157. The helical transmembrane segment at 49-71 (ALYGLGLLLTPPLALFLCGLLVN) threads the bilayer. Residues 72–98 (RQSVLMVEEWRRPAGHRRKDLGIIRYM) lie on the Cytoplasmic side of the membrane. Residue Cys-99 is the site of S-palmitoyl cysteine attachment. The helical transmembrane segment at 99 to 124 (CSSVLQRALAAPLVWILLALLDGKCF) threads the bilayer. Residues 125-176 (VCAFSNSVDPEKFLDFANMTPRQVQLFLAKVPCKEDELVKNSPARKAVSRYL) are Extracellular-facing. An N-linked (GlcNAc...) asparagine glycan is attached at Asn-142. The chain crosses the membrane as a helical span at residues 177 to 202 (RCLSQAIGWSITLLVIVVAFLARCLR). 2 S-palmitoyl cysteine lipidation sites follow: Cys-200 and Cys-204. Residues 203 to 347 (PCFDQTVFLQ…GTKLCHQLNV (145 aa)) lie on the Cytoplasmic side of the membrane. A disordered region spans residues 265-290 (GGIPESQESSEPPELREDRDSGNGKA). Basic and acidic residues predominate over residues 277–286 (PELREDRDSG).

The protein belongs to the CALHM family. Associates with CALHM1 as a pore-forming subunit in a hetero-hexameric channel complex. N-glycosylated. Post-translationally, palmitoylated by ZDHHC3 and ZDHHC15. Palmitoylation positively regulates CALHM1:CALHM3 channel conductance. In terms of tissue distribution, expressed in taste bud cells.

The protein resides in the basolateral cell membrane. It carries out the reaction ATP(in) = ATP(out). The enzyme catalyses Ca(2+)(in) = Ca(2+)(out). It catalyses the reaction Na(+)(in) = Na(+)(out). The catalysed reaction is K(+)(in) = K(+)(out). It carries out the reaction chloride(in) = chloride(out). Its function is as follows. Pore-forming subunit of gustatory voltage-gated ion channels required for sensory perception of sweet, bitter and umami tastes. With CALHM1 forms a fast-activating voltage-gated ATP-release channel in type II taste bud cells, ATP acting as a neurotransmitter to activate afferent neural gustatory pathways. Acts both as a voltage-gated and calcium-activated ion channel: mediates neuronal excitability in response to membrane depolarization and low extracellular Ca(2+) concentration. Has poor ion selectivity and forms a wide pore (around 14 Angstroms) that mediates permeation of small ions including Ca(2+), Na(+), K(+) and Cl(-), as well as larger ions such as ATP(4-). This Mus musculus (Mouse) protein is Calcium homeostasis modulator protein 3.